The chain runs to 344 residues: Dihydroorotase (344 aa).

Zn(2+) contacts are provided by H13 and H15. Substrate contacts are provided by residues 15-17 (HVR) and N41. Zn(2+)-binding residues include K99, H136, and H174. The residue at position 99 (K99) is an N6-carboxylysine. H136 provides a ligand contact to substrate. Residue L219 coordinates substrate. Residue D247 coordinates Zn(2+). The active site involves D247. Substrate is bound by residues H251 and A263.

This sequence belongs to the metallo-dependent hydrolases superfamily. DHOase family. Class II DHOase subfamily. Homodimer. Zn(2+) is required as a cofactor.

It carries out the reaction (S)-dihydroorotate + H2O = N-carbamoyl-L-aspartate + H(+). It participates in pyrimidine metabolism; UMP biosynthesis via de novo pathway; (S)-dihydroorotate from bicarbonate: step 3/3. Catalyzes the reversible cyclization of carbamoyl aspartate to dihydroorotate. This is Dihydroorotase from Aromatoleum aromaticum (strain DSM 19018 / LMG 30748 / EbN1) (Azoarcus sp. (strain EbN1)).